The sequence spans 634 residues: Kelch-like protein 22 (634 aa).

A2 carries the N-acetylalanine modification. Residues 50-117 (FDVVLVVEGR…IYTSELELSL (68 aa)) enclose the BTB domain. Kelch repeat units follow at residues 299-349 (CVVG…VLNN), 350-399 (FVYL…VVGR), 400-446 (YIYA…TLEG), 448-493 (MYIT…TLLN), 494-544 (KLYV…VLDN), and 545-593 (RIYV…VLTL). Phosphothreonine is present on T463. Y466 bears the Phosphotyrosine mark. The residue at position 475 (T475) is a Phosphothreonine. The segment at 600 to 634 (EPPRGTPDRSQADPDFASEVMSVSDWEEFDNSSED) is disordered. Residue T605 is modified to Phosphothreonine. Residues 624–634 (DWEEFDNSSED) show a composition bias toward acidic residues.

As to quaternary structure, component of the BCR(KLHL22) E3 ubiquitin ligase complex, at least composed of CUL3, KLHL22 and RBX1. Interacts with PLK1. Interacts with DEPDC5 (via DEP domain); the interaction depends on amino acid availability. Interacts with YWHAE; required for the nuclear localization of KLHL22 upon amino acid starvation.

Its subcellular location is the cytoplasm. The protein resides in the cytosol. It localises to the cytoskeleton. It is found in the microtubule organizing center. The protein localises to the centrosome. Its subcellular location is the spindle. The protein resides in the nucleus. It localises to the lysosome. Its pathway is protein modification; protein ubiquitination. Its function is as follows. Substrate-specific adapter of a BCR (BTB-CUL3-RBX1) E3 ubiquitin ligase complex required for chromosome alignment and localization of PLK1 at kinetochores. The BCR(KLHL22) ubiquitin ligase complex mediates monoubiquitination of PLK1, leading to PLK1 dissociation from phosphoreceptor proteins and subsequent removal from kinetochores, allowing silencing of the spindle assembly checkpoint (SAC) and chromosome segregation. Monoubiquitination of PLK1 does not lead to PLK1 degradation. The BCR(KLHL22) ubiquitin ligase complex is also responsible for the amino acid-stimulated 'Lys-48' polyubiquitination and proteasomal degradation of DEPDC5. Through the degradation of DEPDC5, releases the GATOR1 complex-mediated inhibition of the TORC1 pathway. It is therefore an amino acid-dependent activator within the amino acid-sensing branch of the TORC1 pathway, indirectly regulating different cellular processes including cell growth and autophagy. This Homo sapiens (Human) protein is Kelch-like protein 22.